We begin with the raw amino-acid sequence, 267 residues long: 4-hydroxy-tetrahydrodipicolinate reductase (267 aa).

NAD(+) is bound by residues 8-13 and glutamate 34; that span reads GAAGRM. An NADP(+)-binding site is contributed by arginine 35. Residues 98–100 and 122–125 each bind NAD(+); these read GST and APNM. Histidine 155 (proton donor/acceptor) is an active-site residue. Position 156 (histidine 156) interacts with (S)-2,3,4,5-tetrahydrodipicolinate. Catalysis depends on lysine 159, which acts as the Proton donor. 165–166 lines the (S)-2,3,4,5-tetrahydrodipicolinate pocket; sequence GT.

Belongs to the DapB family.

Its subcellular location is the cytoplasm. The enzyme catalyses (S)-2,3,4,5-tetrahydrodipicolinate + NAD(+) + H2O = (2S,4S)-4-hydroxy-2,3,4,5-tetrahydrodipicolinate + NADH + H(+). It catalyses the reaction (S)-2,3,4,5-tetrahydrodipicolinate + NADP(+) + H2O = (2S,4S)-4-hydroxy-2,3,4,5-tetrahydrodipicolinate + NADPH + H(+). It participates in amino-acid biosynthesis; L-lysine biosynthesis via DAP pathway; (S)-tetrahydrodipicolinate from L-aspartate: step 4/4. Functionally, catalyzes the conversion of 4-hydroxy-tetrahydrodipicolinate (HTPA) to tetrahydrodipicolinate. The polypeptide is 4-hydroxy-tetrahydrodipicolinate reductase (Citrifermentans bemidjiense (strain ATCC BAA-1014 / DSM 16622 / JCM 12645 / Bem) (Geobacter bemidjiensis)).